A 303-amino-acid chain; its full sequence is NAC domain-containing protein 48 (303 aa).

Residues 9-159 (LPPGFRFHPT…DWVLCRIYNK (151 aa)) form the NAC domain.

Interacts with NAC071. As to expression, widely expressed.

Its subcellular location is the nucleus. Transcription activator that binds to the promoter of the stress response gene LEA19. Involved in tolerance to abiotic stresses. Transcription activator involved in response to abiotic and biotic stresses. Involved in drought and salt stress responses, and defense response to the rice blast fungus. Transcription activator involved tolerance to cold and salt stresses. Transcription activator involved in tolerance to drought stress. Targets directly and activates genes involved in membrane modification, nicotianamine (NA) biosynthesis, glutathione relocation, accumulation of phosphoadenosine phosphosulfate and glycosylation in roots. Controls root growth at early vegetative stage through chromatin modification and histone lysine deacytaltion by HDAC1. In Oryza sativa subsp. japonica (Rice), this protein is NAC domain-containing protein 48.